Here is a 298-residue protein sequence, read N- to C-terminus: Olfactory receptor 5AK3 (298 aa).

Residues 1–25 (MGRGNSTEVTEFHLLGFGVQHEFQH) lie on the Extracellular side of the membrane. Residue asparagine 5 is glycosylated (N-linked (GlcNAc...) asparagine). The chain crosses the membrane as a helical span at residues 26–46 (VLFIVLLLIYVTSLIGNIGMI). Residues 47–54 (LLIKTDSR) are Cytoplasmic-facing. Residues 55-75 (LQTPMYFFPQHLAFVDICYTS) form a helical membrane-spanning segment. Topologically, residues 76–99 (AITPKMLQSFTEENNLITFRGCVI) are extracellular. Cysteine 97 and cysteine 189 are oxidised to a cystine. A helical transmembrane segment spans residues 100–120 (QFLVYATFATSDCYLLAIMAM). Topologically, residues 121-133 (DCYVAICKPLRYP) are cytoplasmic. Residues 134 to 154 (MIMSQTVYIQLVAGSYIIGSI) traverse the membrane as a helical segment. An N-linked (GlcNAc...) asparagine glycan is attached at asparagine 155. The Extracellular portion of the chain corresponds to 155 to 196 (NASVHTGFTFSLSFCKSNKINHFFCDGLPILALSCSNIDINI). A helical transmembrane segment spans residues 197–217 (ILDVVFVGFDLMFTELVIIFS). Topologically, residues 218–237 (YIYIMVTILKMSSTAGRKKS) are cytoplasmic. A helical membrane pass occupies residues 238–258 (FSTCASHLTAVTIFYGTLSYM). At 259–271 (YLQPQSNNSQENM) the chain is on the extracellular side. Asparagine 265 carries an N-linked (GlcNAc...) asparagine glycan. A helical membrane pass occupies residues 272 to 292 (KVASIFYGTVIPMLNPLIYSL). Residues 293 to 298 (RNKEGK) lie on the Cytoplasmic side of the membrane.

It belongs to the G-protein coupled receptor 1 family.

It is found in the cell membrane. Odorant receptor. The protein is Olfactory receptor 5AK3 (OR5AK3P) of Homo sapiens (Human).